The sequence spans 281 residues: UDP-N-acetylenolpyruvoylglucosamine reductase (281 aa).

The 164-residue stretch at 17–180 folds into the FAD-binding PCMH-type domain; it reads VGGKAKKLII…LSATFKFDNG (164 aa). Residue Arg159 is part of the active site. The active-site Proton donor is the Ser206. Residue Glu276 is part of the active site.

It belongs to the MurB family. FAD serves as cofactor.

It is found in the cytoplasm. It catalyses the reaction UDP-N-acetyl-alpha-D-muramate + NADP(+) = UDP-N-acetyl-3-O-(1-carboxyvinyl)-alpha-D-glucosamine + NADPH + H(+). The protein operates within cell wall biogenesis; peptidoglycan biosynthesis. In terms of biological role, cell wall formation. The polypeptide is UDP-N-acetylenolpyruvoylglucosamine reductase (Fusobacterium nucleatum subsp. nucleatum (strain ATCC 25586 / DSM 15643 / BCRC 10681 / CIP 101130 / JCM 8532 / KCTC 2640 / LMG 13131 / VPI 4355)).